A 391-amino-acid chain; its full sequence is Stearoyl-[acyl-carrier-protein] 9-desaturase 6, chloroplastic (391 aa).

Residues 1-38 (MLAHKSLLSFTTQWATLMPSPSTFLASRPRGPAKISAV) constitute a chloroplast transit peptide. Residues glutamate 130, glutamate 168, histidine 171, glutamate 221, glutamate 254, and histidine 257 each contribute to the Fe cation site.

Belongs to the fatty acid desaturase type 2 family. In terms of assembly, homodimer. It depends on Fe(2+) as a cofactor.

It is found in the plastid. The protein localises to the chloroplast. It carries out the reaction octadecanoyl-[ACP] + 2 reduced [2Fe-2S]-[ferredoxin] + O2 + 2 H(+) = (9Z)-octadecenoyl-[ACP] + 2 oxidized [2Fe-2S]-[ferredoxin] + 2 H2O. Its pathway is lipid metabolism; fatty acid metabolism. In terms of biological role, converts stearoyl-ACP to oleoyl-ACP by introduction of a cis double bond between carbons 9 and 10 of the acyl chain. The sequence is that of Stearoyl-[acyl-carrier-protein] 9-desaturase 6, chloroplastic (S-ACP-DES6) from Arabidopsis thaliana (Mouse-ear cress).